Consider the following 33-residue polypeptide: Cytochrome b6-f complex subunit 8 (33 aa).

Residues 2-22 (LISLGWAALAATFTFSIAMVV) form a helical membrane-spanning segment.

Belongs to the PetN family. As to quaternary structure, the 4 large subunits of the cytochrome b6-f complex are cytochrome b6, subunit IV (17 kDa polypeptide, PetD), cytochrome f and the Rieske protein, while the 4 small subunits are PetG, PetL, PetM and PetN. The complex functions as a dimer.

It localises to the cellular thylakoid membrane. Functionally, component of the cytochrome b6-f complex, which mediates electron transfer between photosystem II (PSII) and photosystem I (PSI), cyclic electron flow around PSI, and state transitions. This Synechococcus sp. (strain RCC307) protein is Cytochrome b6-f complex subunit 8.